Reading from the N-terminus, the 44-residue chain is Conotoxin Fi11.11 (44 aa).

Cystine bridges form between Cys-1–Cys-15, Cys-8–Cys-20, Cys-14–Cys-24, and Cys-19–Cys-28. Asn-30 carries the asparagine amide modification. A propeptide spanning residues 35-44 is cleaved from the precursor; it reads QVPLKSFGQR.

This sequence belongs to the conotoxin I2 superfamily. Expressed by the venom duct.

The protein localises to the secreted. The polypeptide is Conotoxin Fi11.11 (Conus figulinus (Fig cone)).